The sequence spans 387 residues: Acetylornithine deacetylase (387 aa).

His80 lines the Zn(2+) pocket. The active site involves Asp82. Asp112 is a binding site for Zn(2+). Residue Glu144 is part of the active site. Residues Glu145, Glu169, and His355 each contribute to the Zn(2+) site.

The protein belongs to the peptidase M20A family. ArgE subfamily. Homodimer. Zn(2+) is required as a cofactor. Requires Co(2+) as cofactor. Glutathione serves as cofactor.

The protein resides in the cytoplasm. The enzyme catalyses N(2)-acetyl-L-ornithine + H2O = L-ornithine + acetate. It participates in amino-acid biosynthesis; L-arginine biosynthesis; L-ornithine from N(2)-acetyl-L-ornithine (linear): step 1/1. In terms of biological role, catalyzes the hydrolysis of the amide bond of N(2)-acetylated L-amino acids. Cleaves the acetyl group from N-acetyl-L-ornithine to form L-ornithine, an intermediate in L-arginine biosynthesis pathway, and a branchpoint in the synthesis of polyamines. The chain is Acetylornithine deacetylase from Proteus mirabilis (strain HI4320).